Consider the following 209-residue polypeptide: MLCSHDDDDPIRTAASHGIRRVRAFDAQRFELAVQSLLEASGIEIDTAHTGKTAQRVRELWQRRLLDGYDIDPAEALGHGFEDPRRDMVIIRSIAVHGVCPHHLLPFRGVAHVAYLPDGRLHGFGRIARMIDAISHRYTYQEWVTNEVAHALVAHGQARGAACLIEAEQLCLLMGENRRGDERVITQCYVGEFEQNMQARTEFLRAIKG.

Cysteine 100, histidine 103, and cysteine 171 together coordinate Zn(2+).

This sequence belongs to the GTP cyclohydrolase I family. As to quaternary structure, toroid-shaped homodecamer, composed of two pentamers of five dimers.

The catalysed reaction is GTP + H2O = 7,8-dihydroneopterin 3'-triphosphate + formate + H(+). It functions in the pathway cofactor biosynthesis; 7,8-dihydroneopterin triphosphate biosynthesis; 7,8-dihydroneopterin triphosphate from GTP: step 1/1. The sequence is that of GTP cyclohydrolase 1 from Ralstonia nicotianae (strain ATCC BAA-1114 / GMI1000) (Ralstonia solanacearum).